We begin with the raw amino-acid sequence, 360 residues long: Phenylalanine--tRNA ligase alpha subunit (360 aa).

A Mg(2+)-binding site is contributed by Glu-260.

This sequence belongs to the class-II aminoacyl-tRNA synthetase family. Phe-tRNA synthetase alpha subunit type 1 subfamily. Tetramer of two alpha and two beta subunits. Mg(2+) serves as cofactor.

The protein localises to the cytoplasm. It carries out the reaction tRNA(Phe) + L-phenylalanine + ATP = L-phenylalanyl-tRNA(Phe) + AMP + diphosphate + H(+). The chain is Phenylalanine--tRNA ligase alpha subunit from Methylocella silvestris (strain DSM 15510 / CIP 108128 / LMG 27833 / NCIMB 13906 / BL2).